The sequence spans 47 residues: Wound-induced basic protein (47 aa).

Residues 1-47 form a disordered region; sequence MIYDVNSPLFRSFLSQKGGSSDKRKTEEQKPKEHRPKASENKPIMTE. Over residues 20 to 40 the composition is skewed to basic and acidic residues; it reads SSDKRKTEEQKPKEHRPKASE.

As to expression, abundant in radicals and epicotyls of seedlings and higher in the roots than in stems and leaves of mature plants.

This chain is Wound-induced basic protein (PR4), found in Phaseolus vulgaris (Kidney bean).